Reading from the N-terminus, the 338-residue chain is tRNA N6-adenosine threonylcarbamoyltransferase (338 aa).

Fe cation is bound by residues His-110 and His-114. Substrate is bound by residues 132–136 (ILSGG), Asp-165, Gly-178, and Asn-274. Asp-298 provides a ligand contact to Fe cation.

The protein belongs to the KAE1 / TsaD family. Fe(2+) is required as a cofactor.

It is found in the cytoplasm. It catalyses the reaction L-threonylcarbamoyladenylate + adenosine(37) in tRNA = N(6)-L-threonylcarbamoyladenosine(37) in tRNA + AMP + H(+). Functionally, required for the formation of a threonylcarbamoyl group on adenosine at position 37 (t(6)A37) in tRNAs that read codons beginning with adenine. Is involved in the transfer of the threonylcarbamoyl moiety of threonylcarbamoyl-AMP (TC-AMP) to the N6 group of A37, together with TsaE and TsaB. TsaD likely plays a direct catalytic role in this reaction. This is tRNA N6-adenosine threonylcarbamoyltransferase from Borrelia hermsii (strain HS1 / DAH).